The primary structure comprises 243 residues: Secreted RxLR effector protein 28 (243 aa).

The N-terminal stretch at 1-26 (MHVSRIIAHIALATAITATTVSPTDA) is a signal peptide. A RxLR motif is present at residues 49–52 (RGLR). Positions 187 to 243 (NVDEDKGQNFGHSVSGPPTTTLTGPHTKSGIPPFENLVAPAKGSMPNTRRNGYQFFE) are disordered. The segment covering 199-216 (SVSGPPTTTLTGPHTKSG) has biased composition (low complexity).

Belongs to the RxLR effector family.

The protein resides in the secreted. It localises to the host cytoplasm. The protein localises to the host nucleus. Its function is as follows. Effector that significantly enhances susceptibilities of grapevine and tobacco to pathogens. Acts as a broad suppressor of cell death to interrupt plant immunity. Completely inhibits cell death induced by cell death-inducing proteins, including the PAMP elicitor INF1 from P.infestans. Reduces the transcriptional levels of the defense-related genes and impairs the H(2)O(2) accumulation in N.benthamiana. This is Secreted RxLR effector protein 28 from Plasmopara viticola (Downy mildew of grapevine).